The sequence spans 466 residues: Alpha-galacturonidase (466 aa).

An NAD(+)-binding site is contributed by 11–78 (VKIAYIGGGS…GKWNYETANT (68 aa)). Residue Asn157 participates in substrate binding. Cys179 contributes to the Mn(2+) binding site. Catalysis depends on His180, which acts as the Proton donor. His216 serves as a coordination point for Mn(2+).

Belongs to the glycosyl hydrolase 4 family. As to quaternary structure, homotetramer. NAD(+) serves as cofactor. The cofactor is Mn(2+).

It carries out the reaction [(1-&gt;4)-alpha-D-galacturonosyl](n) + H2O = alpha-D-galacturonate + [(1-&gt;4)-alpha-D-galacturonosyl](n-1). Its function is as follows. Alpha-galacturonidase able to catalyze the hydrolysis of the chromogenic substrate p-nitrophenyl-alpha-D-galacturonic acid (pNPalphaGalUA). It is probable that alpha-1,4-di-galacturonate (GalUA(2)) is the naturally occurring substrate. In Lachnoclostridium phytofermentans (strain ATCC 700394 / DSM 18823 / ISDg) (Clostridium phytofermentans), this protein is Alpha-galacturonidase.